A 194-amino-acid polypeptide reads, in one-letter code: Mitochondrial import inner membrane translocase subunit Tim22 (194 aa).

Cystine bridges form between Cys69/Cys141 and Cys160/Cys179. The next 3 helical transmembrane spans lie at 74 to 94 (ALAC…TAGI), 123 to 143 (MSYA…ECLV), and 170 to 190 (AGLK…AAID).

The protein belongs to the Tim17/Tim22/Tim23 family. In terms of assembly, component of the TIM22 complex, whose core is composed of TIMM22, associated with peripheral protein FXC1/TIMM10B and the 70 kDa heterohexamer. In most cases, the 70 kDa complex is composed of TIMM9 and TIMM10 (TIMM10A or TIMM10B). A small fraction of the 70 kDa complex is composed of TIMM8 (TIMM8A/DDP1 or TIMM8B/DDP2) and TIMM13. The TIM22 complex also contains AGK and TIMM29. Interacts directly with TIMM9, TIMM10A and FXC1/TIMM10B. Interacts (when oxidized) with TIMM29; interaction is direct. In terms of processing, disulfide bonds promote efficient assembly of the TIM22 complex.

It is found in the mitochondrion inner membrane. Its function is as follows. Essential core component of the TIM22 complex, a complex that mediates the import and insertion of multi-pass transmembrane proteins into the mitochondrial inner membrane. In the TIM22 complex, it constitutes the voltage-activated and signal-gated channel. Forms a twin-pore translocase that uses the membrane potential as external driving force in 2 voltage-dependent steps. The sequence is that of Mitochondrial import inner membrane translocase subunit Tim22 (TIMM22) from Bos taurus (Bovine).